Consider the following 529-residue polypeptide: Tyrosinase (529 aa).

An N-terminal signal peptide occupies residues 1–18 (MLLAVLYCLLWSFQTSAG). Topologically, residues 19-476 (HFPRACVSSK…YLEQASRIWS (458 aa)) are lumenal, melanosome. 3 N-linked (GlcNAc...) asparagine glycosylation sites follow: asparagine 86, asparagine 111, and asparagine 161. Positions 180, 202, and 211 each coordinate Cu cation. Asparagine 230 carries an N-linked (GlcNAc...) asparagine glycan. A disordered region spans residues 287-313 (SLCNGTPEGPLQRNPGNHDKSRTPRLP). Asparagine 337 carries N-linked (GlcNAc...) asparagine glycosylation. Positions 363 and 367 each coordinate Cu cation. Asparagine 371 carries an N-linked (GlcNAc...) asparagine glycan. Residue histidine 390 participates in Cu cation binding. A helical transmembrane segment spans residues 477-497 (WLLGAAMVGAVLTALLAGLVS). Residues 498–529 (LLCRHKRKQLPEEKQPLLMEKEDYHSLYQSHL) lie on the Cytoplasmic side of the membrane.

This sequence belongs to the tyrosinase family. As to quaternary structure, forms an OPN3-dependent complex with DCT in response to blue light in melanocytes. Cu(2+) is required as a cofactor. Post-translationally, glycosylated.

It is found in the melanosome membrane. The protein resides in the melanosome. The catalysed reaction is 2 L-dopa + O2 = 2 L-dopaquinone + 2 H2O. It catalyses the reaction L-tyrosine + O2 = L-dopaquinone + H2O. The enzyme catalyses 2 5,6-dihydroxyindole-2-carboxylate + O2 = 2 indole-5,6-quinone-2-carboxylate + 2 H2O. Functionally, this is a copper-containing oxidase that functions in the formation of pigments such as melanins and other polyphenolic compounds. Catalyzes the initial and rate limiting step in the cascade of reactions leading to melanin production from tyrosine. In addition to hydroxylating tyrosine to DOPA (3,4-dihydroxyphenylalanine), also catalyzes the oxidation of DOPA to DOPA-quinone, and possibly the oxidation of DHI (5,6-dihydroxyindole) to indole-5,6 quinone. The sequence is that of Tyrosinase (TYR) from Gorilla gorilla gorilla (Western lowland gorilla).